A 579-amino-acid chain; its full sequence is Ribonucleoside-diphosphate reductase small chain (579 aa).

The Fe cation site is built by Asp-130, Glu-160, and His-163. The active site involves Tyr-167. Residues Glu-225, Glu-258, and His-261 each coordinate Fe cation. The 145-residue stretch at 435–579 folds into the Fido domain; sequence DMTWTLKDVH…VSVFVDQFYR (145 aa).

It belongs to the ribonucleoside diphosphate reductase small chain family. Heterotetramer composed of a homodimer of the large subunit (R1) and a homodimer of the small subunit (R2). Larger multisubunit protein complex are also active, composed of (R1)n(R2)n. It depends on Fe cation as a cofactor.

The catalysed reaction is a 2'-deoxyribonucleoside 5'-diphosphate + [thioredoxin]-disulfide + H2O = a ribonucleoside 5'-diphosphate + [thioredoxin]-dithiol. Its function is as follows. Ribonucleoside-diphosphate reductase holoenzyme provides the precursors necessary for viral DNA synthesis. Allows virus growth in non-dividing cells. Catalyzes the biosynthesis of deoxyribonucleotides from the corresponding ribonucleotides. This is Ribonucleoside-diphosphate reductase small chain from Magallana gigas (Pacific oyster).